The chain runs to 493 residues: Keratin, type II cuticular Hb3 (493 aa).

The interval 1–111 (MTCGFSTVGS…PNAQCVKQEE (111 aa)) is head. Residues 111–422 (EKEQIKCLNN…RLLEGEEQRL (312 aa)) enclose the IF rod domain. The tract at residues 112–146 (KEQIKCLNNRFAAFIDKVRFLEQQNKLLETKLQFY) is coil 1A. The linker 1 stretch occupies residues 147–156 (QNRQCCESNL). The segment at 157 to 257 (EPLFEGYIET…YEEEIRVLQA (101 aa)) is coil 1B. Lys-217 participates in a covalent cross-link: Glycyl lysine isopeptide (Lys-Gly) (interchain with G-Cter in SUMO1). Positions 258–274 (NISDTSVIVKMDNSRGL) are linker 12. Residues 275 to 418 (NMDNIVAEIK…ATYRRLLEGE (144 aa)) are coil 2. Positions 419-493 (EQRLCEGVGA…GGGSCSLGRC (75 aa)) are tail.

It belongs to the intermediate filament family. As to quaternary structure, heterotetramer of two type I and two type II keratins.

This Bos taurus (Bovine) protein is Keratin, type II cuticular Hb3.